The primary structure comprises 650 residues: MAFSGALTITDLDDFLTPSQACIIPVRNNKKPAEDEGPTEIHIDSNNNYYEVSTYPSVGHDDDIGNSKKALEKAEINLNDCLACSGCITSTESLLITMQSQNEILEFIKTNPTVVDPESPCHKPRLPILSISPQTLASLSAAYATASSRPPIPLLVLLRRIRAFLSQPEKGSWRVWDTTFARHMSLRESVVEFHERKDKKEKGKAAEMPMLASACPGWVCYAEKAQGDMLPLLSAARSSQGIIGALAKSWYGHKLQHKPDEIYHVTAMPCYDKKLEASRSDFYSSLYSTRDVDCVLTTGELDLLLQELGFDPHVPIANESTPSYSATEDSPFPELLTHEGSSSGSYLQTIIHDVQRSHPNPTRIITREIRGSTDNIEYLIQDTITGQIVFKGAKVYGFRNLQNLVRKVAKETGIGRSGRGAGAGKLSAAVAARRRKAKTAAPAATSATTSAEGTDVESIASLSLVSGEDKKLDFVEVMACPGGCVNGGGQMKPTVPTPSAPEAMEVDEEGYQRPLPDDGVAVAVNGGSNNVGTGTVAGMEEGMRWSTKEWVAKVEDIYWTGLPTPPASPPLTASNVNGFAPQVKTNGTTNGQVNNGVDRNLQSDQLAEEIIHEVCGDDASKRWDFMRTRFRKVESDVLSSGGVTHEAVKW.

[4Fe-4S] cluster-binding residues include cysteine 22, cysteine 81, cysteine 84, cysteine 87, cysteine 215, cysteine 270, cysteine 480, and cysteine 484.

This sequence belongs to the NARF family.

In terms of biological role, component of the cytosolic Fe/S protein assembly machinery. Required for maturation of extramitochondrial Fe/S proteins. May play a role in the transfer of pre-assembled Fe/S clusters to target apoproteins. This chain is Cytosolic Fe-S cluster assembly factor NAR1 (NAR1), found in Cryptococcus neoformans var. neoformans serotype D (strain JEC21 / ATCC MYA-565) (Filobasidiella neoformans).